A 151-amino-acid chain; its full sequence is D-aminoacyl-tRNA deacylase (151 aa).

The Gly-cisPro motif, important for rejection of L-amino acids signature appears at 137-138 (GP).

This sequence belongs to the DTD family. In terms of assembly, homodimer.

Its subcellular location is the cytoplasm. It catalyses the reaction glycyl-tRNA(Ala) + H2O = tRNA(Ala) + glycine + H(+). It carries out the reaction a D-aminoacyl-tRNA + H2O = a tRNA + a D-alpha-amino acid + H(+). An aminoacyl-tRNA editing enzyme that deacylates mischarged D-aminoacyl-tRNAs. Also deacylates mischarged glycyl-tRNA(Ala), protecting cells against glycine mischarging by AlaRS. Acts via tRNA-based rather than protein-based catalysis; rejects L-amino acids rather than detecting D-amino acids in the active site. By recycling D-aminoacyl-tRNA to D-amino acids and free tRNA molecules, this enzyme counteracts the toxicity associated with the formation of D-aminoacyl-tRNA entities in vivo and helps enforce protein L-homochirality. This chain is D-aminoacyl-tRNA deacylase, found in Acaryochloris marina (strain MBIC 11017).